We begin with the raw amino-acid sequence, 85 residues long: Small proline-rich protein 2D (85 aa).

Positions 1–11 are enriched in low complexity; sequence MSYQQQQCKQP. The disordered stretch occupies residues 1-20; the sequence is MSYQQQQCKQPCQPPPVCPP. 4 repeat units span residues 21-29, 30-38, 39-47, and 48-56. Residues 21–56 form a 4 X 9 AA approximate tandem repeats region; the sequence is KKCPEPCPPLKCPEPCPPPKCPEPCPPPKCPEPCPE. Residues 57–85 form a disordered region; that stretch reads PCPPPSCQQKCPPAQPPPPCQQKCPPKSK.

The protein belongs to the cornifin (SPRR) family. As to expression, expressed in uterus.

It is found in the cytoplasm. Functionally, cross-linked envelope protein of keratinocytes. It is a keratinocyte protein that first appears in the cell cytosol, but ultimately becomes cross-linked to membrane proteins by transglutaminase. All that results in the formation of an insoluble envelope beneath the plasma membrane. The sequence is that of Small proline-rich protein 2D (Sprr2d) from Mus musculus (Mouse).